Reading from the N-terminus, the 289-residue chain is Shikimate dehydrogenase (NADP(+)) (289 aa).

Residues 22–24 (SRS) and Thr-69 contribute to the shikimate site. Lys-73 (proton acceptor) is an active-site residue. Glu-85 is an NADP(+) binding site. Positions 94 and 109 each coordinate shikimate. Residues 134-138 (GAGGA), 158-163 (NRTLSR), and Ile-226 each bind NADP(+). Tyr-228 serves as a coordination point for shikimate. Gly-249 provides a ligand contact to NADP(+).

The protein belongs to the shikimate dehydrogenase family. Homodimer.

It carries out the reaction shikimate + NADP(+) = 3-dehydroshikimate + NADPH + H(+). The protein operates within metabolic intermediate biosynthesis; chorismate biosynthesis; chorismate from D-erythrose 4-phosphate and phosphoenolpyruvate: step 4/7. Involved in the biosynthesis of the chorismate, which leads to the biosynthesis of aromatic amino acids. Catalyzes the reversible NADPH linked reduction of 3-dehydroshikimate (DHSA) to yield shikimate (SA). This chain is Shikimate dehydrogenase (NADP(+)), found in Brucella melitensis biotype 2 (strain ATCC 23457).